Consider the following 66-residue polypeptide: MKTGIHPNYKTVMVKCTCGNEFESGSVKEEIRVETCSECHPFYTGRQKFAEAGGRVDRFNKKYGLK.

Residues cysteine 16, cysteine 18, cysteine 36, and cysteine 39 each coordinate Zn(2+).

This sequence belongs to the bacterial ribosomal protein bL31 family. Type A subfamily. In terms of assembly, part of the 50S ribosomal subunit. Zn(2+) serves as cofactor.

In terms of biological role, binds the 23S rRNA. This Priestia megaterium (Bacillus megaterium) protein is Large ribosomal subunit protein bL31.